The sequence spans 386 residues: MISRNSILLRRLYPTTIIRTLATDATESTSVKTKRRRTIFTDELNKGPSFDDFVSGKAKDMLEDPLETARKDPNAKLPSWLKVPIPKGKSFHNVKKDVRELKLATVCEEAKCPNIGECWGGKKSEATATIMLLGDTCTRGCRFCSVKTNRKPAAPDPMEPENTAEAISRWGLGYVVLTTVDRDDLVDGGARHLAETVQKIKQKAPQILVEVLGGDFRGDLSMVEILADSGLDVYAHNLETVEALTPHIRDRRATYRQSLAVLERAKQTNSSLITKTSLMLGFGETDDQVLQTLRDLREIGCDVVTFGQYMRPTKRHMKVVEYIKPEKFDYWRDTALDMGFLYVASGPLVRSSYKAGEAFIENVLKKRKHNVGETPRLAQEIKPSIY.

The transit peptide at 1-21 directs the protein to the mitochondrion; the sequence is MISRNSILLRRLYPTTIIRTL. 7 residues coordinate [4Fe-4S] cluster: Cys107, Cys112, Cys118, Cys137, Cys141, Cys144, and Ser352. One can recognise a Radical SAM core domain in the interval 122–341; that stretch reads KKSEATATIM…RDTALDMGFL (220 aa).

The protein belongs to the radical SAM superfamily. Lipoyl synthase family. It depends on [4Fe-4S] cluster as a cofactor.

The protein resides in the mitochondrion. It catalyses the reaction [[Fe-S] cluster scaffold protein carrying a second [4Fe-4S](2+) cluster] + N(6)-octanoyl-L-lysyl-[protein] + 2 oxidized [2Fe-2S]-[ferredoxin] + 2 S-adenosyl-L-methionine + 4 H(+) = [[Fe-S] cluster scaffold protein] + N(6)-[(R)-dihydrolipoyl]-L-lysyl-[protein] + 4 Fe(3+) + 2 hydrogen sulfide + 2 5'-deoxyadenosine + 2 L-methionine + 2 reduced [2Fe-2S]-[ferredoxin]. Its pathway is protein modification; protein lipoylation via endogenous pathway; protein N(6)-(lipoyl)lysine from octanoyl-[acyl-carrier-protein]: step 2/2. Its function is as follows. Catalyzes the radical-mediated insertion of two sulfur atoms into the C-6 and C-8 positions of the octanoyl moiety bound to the lipoyl domains of lipoate-dependent enzymes, thereby converting the octanoylated domains into lipoylated derivatives. The sequence is that of Lipoyl synthase, mitochondrial (LAB5) from Candida albicans (strain SC5314 / ATCC MYA-2876) (Yeast).